The following is a 160-amino-acid chain: Ribosomal RNA large subunit methyltransferase H (160 aa).

Residues glycine 108 and 127–132 (FGLMTW) each bind S-adenosyl-L-methionine.

Belongs to the RNA methyltransferase RlmH family. As to quaternary structure, homodimer.

The protein resides in the cytoplasm. It catalyses the reaction pseudouridine(1915) in 23S rRNA + S-adenosyl-L-methionine = N(3)-methylpseudouridine(1915) in 23S rRNA + S-adenosyl-L-homocysteine + H(+). In terms of biological role, specifically methylates the pseudouridine at position 1915 (m3Psi1915) in 23S rRNA. This Bartonella bacilliformis (strain ATCC 35685 / KC583 / Herrer 020/F12,63) protein is Ribosomal RNA large subunit methyltransferase H.